The following is a 201-amino-acid chain: MENLNSYIKGHFADSILVKEQILKDENLITLIKNASLEVIKAYKNGNKTLLAGNGGSAADAQHIAGEFVSRFYFDRPGIASIALTTDTSILTAIGNDYGYENLFARQVQAQGVKGDVFIGISTSGNSKNILKALEFCKQKEIISIGLSGASGGAMNELCDYCIKVPSTCTPRIQEAHILIGHIICAIVEEELFGKGFSCKQ.

The 160-residue stretch at 39–198 folds into the SIS domain; that stretch reads VIKAYKNGNK…EEELFGKGFS (160 aa). 54-56 is a binding site for substrate; sequence NGG. Zn(2+) contacts are provided by His63 and Glu67. Substrate contacts are provided by residues Glu67, 96–97, 122–124, Ser127, and Gln174; these read ND and STS. Residues Gln174 and His182 each contribute to the Zn(2+) site.

This sequence belongs to the SIS family. GmhA subfamily. Homotetramer. Requires Zn(2+) as cofactor.

Its subcellular location is the cytoplasm. It catalyses the reaction 2 D-sedoheptulose 7-phosphate = D-glycero-alpha-D-manno-heptose 7-phosphate + D-glycero-beta-D-manno-heptose 7-phosphate. The protein operates within carbohydrate biosynthesis; D-glycero-D-manno-heptose 7-phosphate biosynthesis; D-glycero-alpha-D-manno-heptose 7-phosphate and D-glycero-beta-D-manno-heptose 7-phosphate from sedoheptulose 7-phosphate: step 1/1. Its pathway is capsule biogenesis; capsule polysaccharide biosynthesis. Functionally, catalyzes the isomerization of sedoheptulose 7-phosphate in D-glycero-D-manno-heptose 7-phosphate. No activity with L-galacto-heptulose, L-galacto-heptulose 7-phosphate or D-manno-heptulose. The chain is Phosphoheptose isomerase 2 from Campylobacter jejuni subsp. jejuni serotype O:2 (strain ATCC 700819 / NCTC 11168).